We begin with the raw amino-acid sequence, 368 residues long: Methionine import ATP-binding protein MetN (368 aa).

Residues 5-260 (IELNNLSVQF…PKEALTKQFI (256 aa)) enclose the ABC transporter domain. 41–48 (GYSGAGKS) serves as a coordination point for ATP.

This sequence belongs to the ABC transporter superfamily. Methionine importer (TC 3.A.1.24) family. The complex is composed of two ATP-binding proteins (MetN), two transmembrane proteins (MetI) and a solute-binding protein (MetQ).

It is found in the cell membrane. It catalyses the reaction L-methionine(out) + ATP + H2O = L-methionine(in) + ADP + phosphate + H(+). The enzyme catalyses D-methionine(out) + ATP + H2O = D-methionine(in) + ADP + phosphate + H(+). Functionally, part of the ABC transporter complex MetNIQ involved in methionine import. Responsible for energy coupling to the transport system. The chain is Methionine import ATP-binding protein MetN from Lactococcus lactis subsp. cremoris (strain MG1363).